Reading from the N-terminus, the 1661-residue chain is Cortactin-binding protein 2 (1661 aa).

5 disordered regions span residues 1–27 (MATDGASCEPDFSRASEDAAEATAEAT), 206–226 (EKKRTNELEEELSTEKRRSTE), 329–438 (TVPV…SLHP), 454–477 (NANDQDQNGNTTQSPPSRDVSPTS), and 493–612 (QALS…LPPK). The stretch at 124 to 280 (KMQERMSTQL…EQLKRGNDSK (157 aa)) forms a coiled coil. The segment covering 383–394 (GPSTGSTPDLPS) has biased composition (low complexity). Residues 412-426 (SIASQNYSQASSLHS) show a composition bias toward polar residues. Positions 454–466 (NANDQDQNGNTTQ) are enriched in low complexity. The span at 467–477 (SPPSRDVSPTS) shows a compositional bias: polar residues. An Asymmetric dimethylarginine modification is found at Arg-497. 5 ANK repeats span residues 707-737 (GRPTLLQQAAAQGNVTLLSMLLNEEGLDINY), 741-770 (DGHSALYSAAKNGHTDCVRLLLNAEAQVNA), 774-803 (NGFTPLCAAAAQGHDKCVELLIAYRANINH), 807-836 (GGQTPLYLACKNGNKECIKLLLEAGTDRSV), and 840-869 (DGWTPVHAAVDTGNVDSLKLLMYHRAPACG). Residues 876–896 (EPESDVFDLDGGGERPEGTVK) form a disordered region. The ANK 6 repeat unit spans residues 910 to 940 (EGWTAAHIAASKGFKNCLEILCQHGGLEPER). The interval 1444–1480 (GKKKGENGAWRKVSTSPRKKSGRFPSPTWSKPDLSDE) is disordered. Ser-1522 is modified (phosphoserine). Disordered stretches follow at residues 1555 to 1597 (RRFD…SNSK) and 1614 to 1661 (PRSK…KPNK). Over residues 1580–1597 (KEVSPLSSHQTTECSNSK) the composition is skewed to polar residues. Residues 1622-1636 (SQNTRRSSSSSNTRQ) are compositionally biased toward low complexity. The segment covering 1643 to 1661 (SKDEIWNLRKNEQVEKPNK) has biased composition (basic and acidic residues).

As to quaternary structure, interacts with CTTN/cortactin SH3 domain. Interacts with STRN, STRN4/zinedin and MOB4/phocein; this interactions mediate the association with the STRIPAK core complex and may regulate dendritic spine distribution of the STRIPAK complex in hippocampal neurons. Activation of glutamate receptors weakens the interaction with STRN and STRN4.

It is found in the cytoplasm. Its subcellular location is the cell cortex. It localises to the cell projection. The protein localises to the dendritic spine. Functionally, regulates the dendritic spine distribution of CTTN/cortactin in hippocampal neurons, and thus controls dendritic spinogenesis and dendritic spine maintenance. Associates with the striatin-interacting phosphatase and kinase (STRIPAK) core complex to regulate dendritic spine distribution of the STRIPAK complex in hippocampal neurons. This is Cortactin-binding protein 2 (CTTNBP2) from Loxodonta africana (African elephant).